Reading from the N-terminus, the 96-residue chain is Large ribosomal subunit protein eL14 (96 aa).

The protein belongs to the eukaryotic ribosomal protein eL14 family.

The polypeptide is Large ribosomal subunit protein eL14 (Staphylothermus marinus (strain ATCC 43588 / DSM 3639 / JCM 9404 / F1)).